A 208-amino-acid polypeptide reads, in one-letter code: Phosphoribosyl-dephospho-CoA transferase (208 aa).

Catalysis depends on residues aspartate 133 and aspartate 135.

This sequence belongs to the MdcG family.

The catalysed reaction is apo-[malonate decarboxylase ACP] + 2'-(5''-triphospho-alpha-D-ribosyl)-3'-dephospho-CoA = holo-[malonate decarboxylase ACP] + diphosphate. Its function is as follows. Transfers 2'-(5-triphosphoribosyl)-3'-dephosphocoenzyme-A to the apo-[acyl-carrier-protein] of the malonate decarboxylase to yield holo-[acyl-carrier-protein]. This Pseudomonas fluorescens (strain ATCC BAA-477 / NRRL B-23932 / Pf-5) protein is Phosphoribosyl-dephospho-CoA transferase.